Consider the following 358-residue polypeptide: UDP-N-acetylglucosamine--N-acetylmuramyl-(pentapeptide) pyrophosphoryl-undecaprenol N-acetylglucosamine transferase (358 aa).

UDP-N-acetyl-alpha-D-glucosamine-binding positions include 13-15, arginine 166, serine 196, and glutamine 291; that span reads TAG.

It belongs to the glycosyltransferase 28 family. MurG subfamily.

Its subcellular location is the cell membrane. The catalysed reaction is di-trans,octa-cis-undecaprenyl diphospho-N-acetyl-alpha-D-muramoyl-L-alanyl-D-glutamyl-meso-2,6-diaminopimeloyl-D-alanyl-D-alanine + UDP-N-acetyl-alpha-D-glucosamine = di-trans,octa-cis-undecaprenyl diphospho-[N-acetyl-alpha-D-glucosaminyl-(1-&gt;4)]-N-acetyl-alpha-D-muramoyl-L-alanyl-D-glutamyl-meso-2,6-diaminopimeloyl-D-alanyl-D-alanine + UDP + H(+). The protein operates within cell wall biogenesis; peptidoglycan biosynthesis. Functionally, cell wall formation. Catalyzes the transfer of a GlcNAc subunit on undecaprenyl-pyrophosphoryl-MurNAc-pentapeptide (lipid intermediate I) to form undecaprenyl-pyrophosphoryl-MurNAc-(pentapeptide)GlcNAc (lipid intermediate II). This chain is UDP-N-acetylglucosamine--N-acetylmuramyl-(pentapeptide) pyrophosphoryl-undecaprenol N-acetylglucosamine transferase, found in Clostridium botulinum (strain Alaska E43 / Type E3).